A 371-amino-acid polypeptide reads, in one-letter code: Carnitine monooxygenase oxygenase subunit (371 aa).

A Rieske domain is found at 44 to 152 (WICVAHGSEL…VEEYAGFVFI (109 aa)). Residues C86, H88, C106, and H109 each coordinate [2Fe-2S] cluster. Fe cation contacts are provided by H208, H213, and D323.

This sequence belongs to the bacterial ring-hydroxylating dioxygenase alpha subunit family. CntA subfamily. As to quaternary structure, composed of an oxygenase subunit and a reductase subunit. Requires [2Fe-2S] cluster as cofactor. It depends on Fe cation as a cofactor.

The catalysed reaction is (R)-carnitine + NADH + O2 + H(+) = (3R)-3-hydroxy-4-oxobutanoate + trimethylamine + NAD(+) + H2O. It catalyses the reaction (R)-carnitine + NADPH + O2 + H(+) = (3R)-3-hydroxy-4-oxobutanoate + trimethylamine + NADP(+) + H2O. It participates in amine and polyamine metabolism; carnitine metabolism. Its activity is regulated as follows. Inhibited by EDTA. In terms of biological role, converts carnitine to trimethylamine and malic semialdehyde. Acts on both enantiomers. The sequence is that of Carnitine monooxygenase oxygenase subunit from Acinetobacter pittii (strain PHEA-2).